A 309-amino-acid chain; its full sequence is Ribonuclease Z (309 aa).

Zn(2+) is bound by residues His-63, His-65, Asp-67, His-68, His-141, Asp-212, and His-270. The Proton acceptor role is filled by Asp-67.

This sequence belongs to the RNase Z family. Homodimer. The cofactor is Zn(2+).

It catalyses the reaction Endonucleolytic cleavage of RNA, removing extra 3' nucleotides from tRNA precursor, generating 3' termini of tRNAs. A 3'-hydroxy group is left at the tRNA terminus and a 5'-phosphoryl group is left at the trailer molecule.. Zinc phosphodiesterase, which displays some tRNA 3'-processing endonuclease activity. Probably involved in tRNA maturation, by removing a 3'-trailer from precursor tRNA. The chain is Ribonuclease Z from Lactobacillus gasseri (strain ATCC 33323 / DSM 20243 / BCRC 14619 / CIP 102991 / JCM 1131 / KCTC 3163 / NCIMB 11718 / NCTC 13722 / AM63).